A 489-amino-acid polypeptide reads, in one-letter code: 5'-AMP-activated protein kinase subunit gamma-3 (489 aa).

The segment at 1–95 (MEPELEHTLP…TRQEATFPKA (95 aa)) is disordered. The span at 32–47 (GENSWPSPAVATSSER) shows a compositional bias: polar residues. 3 CBS domains span residues 197–258 (MATS…RSPL), 280–340 (CFKP…LLPR), and 355–415 (TFRD…HLDM). Residues R225, 240 to 245 (MLTITD), V285, 306 to 307 (HR), and K325 each bind ADP. AMP contacts are provided by residues R225, 240–245 (MLTITD), V285, H306, 306–307 (HR), K325, T355, A360, 381–382 (SA), 397–400 (SRFD), R424, L432, H453, 453–454 (HR), and 469–472 (SLSD). Residues R225, 240-245 (MLTITD), V285, 306-307 (HR), R307, and K325 contribute to the ATP site. The AMPK pseudosubstrate motif lies at 293–314 (LFEAVYALIKNRIHRLPVLDPV). ADP is bound by residues 397–400 (SRFD), R424, L432, and 453–454 (HR). Residues 397–400 (SRFD), R424, L432, and 453–454 (HR) contribute to the ATP site. A CBS 4 domain is found at 427–486 (CLEGVLSCQPHESLGEVIDRIAREQVHRLVLVDETQHLLGVVSLSDILQALVLSPAGIDA).

The protein belongs to the 5'-AMP-activated protein kinase gamma subunit family. As to quaternary structure, AMPK is a heterotrimer of an alpha catalytic subunit (PRKAA1 or PRKAA2), a beta (PRKAB1 or PRKAB2) and a gamma non-catalytic subunits (PRKAG1, PRKAG2 or PRKAG3). Interacts with FNIP1 and FNIP2. In terms of processing, phosphorylated by ULK1; leading to negatively regulate AMPK activity and suggesting the existence of a regulatory feedback loop between ULK1 and AMPK. Glycosylated; O-GlcNAcylated by OGT, promoting the AMP-activated protein kinase (AMPK) activity.

Functionally, AMP/ATP-binding subunit of AMP-activated protein kinase (AMPK), an energy sensor protein kinase that plays a key role in regulating cellular energy metabolism. In response to reduction of intracellular ATP levels, AMPK activates energy-producing pathways and inhibits energy-consuming processes: inhibits protein, carbohydrate and lipid biosynthesis, as well as cell growth and proliferation. AMPK acts via direct phosphorylation of metabolic enzymes, and by longer-term effects via phosphorylation of transcription regulators. AMPK also acts as a regulator of cellular polarity by remodeling the actin cytoskeleton; probably by indirectly activating myosin. The AMPK gamma3 subunit is a non-catalytic subunit with a regulatory role in muscle energy metabolism. It mediates binding to AMP, ADP and ATP, leading to AMPK activation or inhibition: AMP-binding results in allosteric activation of alpha catalytic subunit (PRKAA1 or PRKAA2) both by inducing phosphorylation and preventing dephosphorylation of catalytic subunits. ADP also stimulates phosphorylation, without stimulating already phosphorylated catalytic subunit. ATP promotes dephosphorylation of catalytic subunit, rendering the AMPK enzyme inactive. This is 5'-AMP-activated protein kinase subunit gamma-3 (Prkag3) from Mus musculus (Mouse).